The sequence spans 237 residues: Heme oxygenase (237 aa).

Heme b is bound at residue His-17.

Belongs to the heme oxygenase family.

It is found in the plastid. It localises to the chloroplast. The enzyme catalyses heme b + 3 reduced [NADPH--hemoprotein reductase] + 3 O2 = biliverdin IXalpha + CO + Fe(2+) + 3 oxidized [NADPH--hemoprotein reductase] + 3 H2O + H(+). Functionally, catalyzes the opening of the heme ring with the release of iron. Key enzyme in the synthesis of the chromophoric part of the photosynthetic antennae. This is Heme oxygenase (pbsA) from Guillardia theta (Cryptophyte).